A 290-amino-acid chain; its full sequence is MTRPDNEPARLRSVAENLAAEAAAFVRGRRAEVFGISRAGDGDGAVRAKSSPTDPVTVVDTDTERLLRDRLAQLRPGDPILGEEGGGPADVTATPSDRVTWVLDPIDGTVNFVYGIPAYAVSIGAQVGGITVAGAVADVAARTVYSAATGLGAHLTDERGRHVLRCTGVDELSMALLGTGFGYSVRCREKQAELLAHVVPLVRDVRRIGSAALDLCMVAAGRLDAYYEHGVQVWDCAAGALIAAEAGARVLLSTPRAGGAGLVVVAAAPGIADELLAALQRFNGLEPIPD.

Residues Glu83, Asp104, Ile106, and Asp107 each contribute to the Mg(2+) site. Glu83 contributes to the substrate binding site. Residues 106–109 (IDGT), Arg206, and Asp235 each bind substrate. Position 235 (Asp235) interacts with Mg(2+).

The protein belongs to the inositol monophosphatase superfamily. Mg(2+) is required as a cofactor.

It catalyses the reaction a myo-inositol phosphate + H2O = myo-inositol + phosphate. In Mycobacterium bovis (strain ATCC BAA-935 / AF2122/97), this protein is Inositol-1-monophosphatase (suhB).